The sequence spans 184 residues: CDP-archaeol synthase (184 aa).

5 helical membrane-spanning segments follow: residues 4–24 (IIMVLYSIFLFLPAFIANPGA), 54–74 (FIGGSLIGVLAGIIVYYIIYI), 86–106 (IISALPVLFAMSFGSLTGDIT), 122–142 (GSLLDQWPFVLMSFLFIFIFA), and 145–165 (FFLEFYGNFIAIILILVLTPP).

It belongs to the CDP-archaeol synthase family. The cofactor is Mg(2+).

It localises to the cell membrane. It carries out the reaction 2,3-bis-O-(geranylgeranyl)-sn-glycerol 1-phosphate + CTP + H(+) = CDP-2,3-bis-O-(geranylgeranyl)-sn-glycerol + diphosphate. It participates in membrane lipid metabolism; glycerophospholipid metabolism. In terms of biological role, catalyzes the formation of CDP-2,3-bis-(O-geranylgeranyl)-sn-glycerol (CDP-archaeol) from 2,3-bis-(O-geranylgeranyl)-sn-glycerol 1-phosphate (DGGGP) and CTP. This reaction is the third ether-bond-formation step in the biosynthesis of archaeal membrane lipids. The chain is CDP-archaeol synthase from Picrophilus torridus (strain ATCC 700027 / DSM 9790 / JCM 10055 / NBRC 100828 / KAW 2/3).